The chain runs to 213 residues: RNA polymerase I subunit H (213 aa).

Basic and acidic residues predominate over residues 1-19 (MVERMKKDTGDETKTKVQE). Positions 1–70 (MVERMKKDTG…AREFTDKPWR (70 aa)) are disordered. Positions 21–31 (PPSPSPPPPPP) are enriched in pro residues. Composition is skewed to basic and acidic residues over residues 43-53 (VPEREKKQIER) and 60-69 (HAREFTDKPW).

In terms of tissue distribution, expressed during spermatogenesis, initially at pachytene stage with abundance increasing in round spermatids and decreasing again during spermatid elongation.

Its function is as follows. May be involved in male sterility. The protein is RNA polymerase I subunit H of Mus musculus (Mouse).